A 285-amino-acid polypeptide reads, in one-letter code: 2,3,4,5-tetrahydropyridine-2,6-dicarboxylate N-succinyltransferase (285 aa).

Belongs to the transferase hexapeptide repeat family.

It localises to the cytoplasm. It catalyses the reaction (S)-2,3,4,5-tetrahydrodipicolinate + succinyl-CoA + H2O = (S)-2-succinylamino-6-oxoheptanedioate + CoA. The protein operates within amino-acid biosynthesis; L-lysine biosynthesis via DAP pathway; LL-2,6-diaminopimelate from (S)-tetrahydrodipicolinate (succinylase route): step 1/3. This chain is 2,3,4,5-tetrahydropyridine-2,6-dicarboxylate N-succinyltransferase, found in Beijerinckia indica subsp. indica (strain ATCC 9039 / DSM 1715 / NCIMB 8712).